We begin with the raw amino-acid sequence, 930 residues long: Vacuolar membrane protease (930 aa).

A disordered region spans residues 1-28; sequence MPQEEVHDTSSVSDDNLTNTGGGGSNYY. The Cytoplasmic portion of the chain corresponds to 1 to 49; the sequence is MPQEEVHDTSSVSDDNLTNTGGGGSNYYNSHNQPNVFVRAIRSIFGYRK. The helical transmembrane segment at 50-70 threads the bilayer; the sequence is TSLTLFVILTIIFTIALSLYD. The Vacuolar portion of the chain corresponds to 71 to 379; the sequence is NNLDLTIELP…YFFSSPISAL (309 aa). Asn163 is a glycosylation site (N-linked (GlcNAc...) asparagine). His177 and Asp189 together coordinate Zn(2+). The Proton acceptor role is filled by Glu222. Residues Glu223, Glu248, and His320 each coordinate Zn(2+). An N-linked (GlcNAc...) asparagine glycan is attached at Asn354. Residues 380–400 form a helical membrane-spanning segment; the sequence is VTINSVLIVLFPILSGPLLFI. Residues 401–411 lie on the Cytoplasmic side of the membrane; sequence TVRYKKWKIGT. Residues 412 to 432 traverse the membrane as a helical segment; sequence SNFLSLPLAIVLTVAIVMIVV. The Vacuolar portion of the chain corresponds to 433-449; that stretch reads NQGFQIANPFLPSSHPL. A helical membrane pass occupies residues 450-470; the sequence is LLVATTTSISLLIYYVFLNGV. At 471–480 the chain is on the cytoplasmic side; it reads NWVSPSGDQK. Residues 481 to 501 form a helical membrane-spanning segment; it reads LITIIEISFIYWLILIYVTHG. Residues 502-514 lie on the Vacuolar side of the membrane; that stretch reads LSQNKIGDDHTGE. The helical transmembrane segment at 515 to 535 threads the bilayer; it reads FPFTVLFFLEATASLFGLIGW. Over 536–598 the chain is Cytoplasmic; sequence TFSRSIKQSS…FGYDWSLQYL (63 aa). Residues 542 to 570 form a disordered region; it reads KQSSNDGSDEPLLTGTAERYGSDDTDEDE. A helical transmembrane segment spans residues 599–619; the sequence is LIVPISSLIIFNSGWLVLDGI. A glycan (N-linked (GlcNAc...) asparagine) is linked at Asn620. At 620–631 the chain is on the vacuolar side; it reads NKSIQESFAAEN. The chain crosses the membrane as a helical span at residues 632–652; sequence LIYLLIQLFSQFWILPILPFV. Over 653 to 657 the chain is Cytoplasmic; the sequence is YKLNR. The chain crosses the membrane as a helical span at residues 658 to 678; it reads FIVFGLTIFAISGVALISFLD. The Vacuolar portion of the chain corresponds to 679–930; sequence PFNQENPLKL…LVSVSLKIEV (252 aa). Asn697, Asn768, Asn808, and Asn890 each carry an N-linked (GlcNAc...) asparagine glycan.

The protein belongs to the peptidase M28 family. Requires Zn(2+) as cofactor.

The protein resides in the vacuole membrane. Functionally, may be involved in vacuolar sorting and osmoregulation. The protein is Vacuolar membrane protease of Candida dubliniensis (strain CD36 / ATCC MYA-646 / CBS 7987 / NCPF 3949 / NRRL Y-17841) (Yeast).